Consider the following 150-residue polypeptide: SsrA-binding protein (150 aa).

It belongs to the SmpB family.

The protein localises to the cytoplasm. Its function is as follows. Required for rescue of stalled ribosomes mediated by trans-translation. Binds to transfer-messenger RNA (tmRNA), required for stable association of tmRNA with ribosomes. tmRNA and SmpB together mimic tRNA shape, replacing the anticodon stem-loop with SmpB. tmRNA is encoded by the ssrA gene; the 2 termini fold to resemble tRNA(Ala) and it encodes a 'tag peptide', a short internal open reading frame. During trans-translation Ala-aminoacylated tmRNA acts like a tRNA, entering the A-site of stalled ribosomes, displacing the stalled mRNA. The ribosome then switches to translate the ORF on the tmRNA; the nascent peptide is terminated with the 'tag peptide' encoded by the tmRNA and targeted for degradation. The ribosome is freed to recommence translation, which seems to be the essential function of trans-translation. The chain is SsrA-binding protein from Borrelia garinii subsp. bavariensis (strain ATCC BAA-2496 / DSM 23469 / PBi) (Borreliella bavariensis).